The chain runs to 380 residues: MEPPVQIFRGEPGPTCSPSTCLPPNGSGWFPGWAEPDGNGSAGSEDVLLEPAHISPVILVIITAVYSVVFVVGLVGNSLVMFVIIRYTKMKTATNIYIFNLALADALVTTTMPFQSTVYLMNSWPFGDVLCKVVISIDYYNMFTSIFTLTMMSVDRYIAVCHPVKALDFRTPLKAKIINICIWILSSSVGISAIVLGGTKVREDMEVIECSLQFPDDDYSWWDLFMKVCVFVFAFVIPVLIIIVCYTLMILRLKSVRLLSGSREKDRNLRRITRLVLVVVAVFVVCWTPIHIFILVEALGSTAHSTAALSSYYFCIALGYTNSSLNPILYAFLDENFKRCFRDFCFPIKMRMERQSTSRVRNTVQDPAYVREVDGVNKPV.

Over 1–57 (MEPPVQIFRGEPGPTCSPSTCLPPNGSGWFPGWAEPDGNGSAGSEDVLLEPAHISPV) the chain is Extracellular. N-linked (GlcNAc...) asparagine glycans are attached at residues Asn25 and Asn39. The helical transmembrane segment at 58–85 (ILVIITAVYSVVFVVGLVGNSLVMFVII) threads the bilayer. The Cytoplasmic portion of the chain corresponds to 86–95 (RYTKMKTATN). Residues 96 to 119 (IYIFNLALADALVTTTMPFQSTVY) traverse the membrane as a helical segment. At 120–132 (LMNSWPFGDVLCK) the chain is on the extracellular side. Cys131 and Cys210 are joined by a disulfide. A helical membrane pass occupies residues 133–154 (VVISIDYYNMFTSIFTLTMMSV). At 155–173 (DRYIAVCHPVKALDFRTPL) the chain is on the cytoplasmic side. Residues 174 to 196 (KAKIINICIWILSSSVGISAIVL) traverse the membrane as a helical segment. The Extracellular segment spans residues 197–222 (GGTKVREDMEVIECSLQFPDDDYSWW). Residues 223 to 247 (DLFMKVCVFVFAFVIPVLIIIVCYT) traverse the membrane as a helical segment. Residues 248–274 (LMILRLKSVRLLSGSREKDRNLRRITR) are Cytoplasmic-facing. Residues 275–296 (LVLVVVAVFVVCWTPIHIFILV) traverse the membrane as a helical segment. Residues 297 to 311 (EALGSTAHSTAALSS) are Extracellular-facing. The chain crosses the membrane as a helical span at residues 312–333 (YYFCIALGYTNSSLNPILYAFL). Residues 334 to 380 (DENFKRCFRDFCFPIKMRMERQSTSRVRNTVQDPAYVREVDGVNKPV) lie on the Cytoplasmic side of the membrane. The S-palmitoyl cysteine moiety is linked to residue Cys345.

It belongs to the G-protein coupled receptor 1 family. In terms of assembly, interacts with NHERF1. Interacts with GABARAPL1.

The protein resides in the cell membrane. Functionally, G-protein coupled opioid receptor that functions as a receptor for endogenous alpha-neoendorphins and dynorphins, but has low affinity for beta-endorphins. Also functions as a receptor for various synthetic opioids and for the psychoactive diterpene salvinorin A. Ligand binding causes a conformation change that triggers signaling via guanine nucleotide-binding proteins (G proteins) and modulates the activity of down-stream effectors, such as adenylate cyclase. Signaling leads to the inhibition of adenylate cyclase activity. Inhibits neurotransmitter release by reducing calcium ion currents and increasing potassium ion conductance. Plays a role in the perception of pain. Plays a role in mediating reduced physical activity upon treatment with synthetic opioids. Plays a role in the regulation of salivation in response to synthetic opioids. May play a role in arousal and regulation of autonomic and neuroendocrine functions. This Bos taurus (Bovine) protein is Kappa-type opioid receptor (OPRK1).